The sequence spans 213 residues: MTENLYTYGIIEQEDLELDVEGVAGAEQVYTVDYKTLSAVVSDIDTTDPERTDEDVEAHNNVLQEVLKHEEERTVVPMSFGMAFKSARTLKGVLRGARRALRSTLNDIEGTVELGVKILGPGDDTVPREEIQENVTDQLADLSINETENDLFTDRLIINKSYLVDFEKRDAFDSAIDDVEAEYDELTIQYTGPWPPYNFVDIHIGAEQQQGGR.

This sequence belongs to the gas vesicle GvpF/GvpL family. As to quaternary structure, binds GvpA1 in early growth stages; is the only one of GvpF1 to GvpM1 that interacts with GvpA1 in H.volcanii experiments. GvpF to GvpM interact with each other in vitro, and may form multi-subunit complex(es). Interacts with GvpC1 and GvpO1.

The protein resides in the gas vesicle. It is found in the cytoplasm. In terms of biological role, might be involved in preventing aggregation of GvpA1. Proteins GvpF to GvpM might be involved in nucleating gas vesicle formation. A minor component of the gas vesicle, also found in soluble extracts. Gas vesicles are hollow, gas filled proteinaceous nanostructures found in several microbial planktonic microorganisms. They allow positioning of halobacteria at the optimal depth for growth in the poorly aerated, shallow brine pools of their habitat. Its function is as follows. Expression of a 9.5 kb p-vac DNA fragment containing 2 divergently transcribed regions (gvpD-gvpE-gvpF-gvpG-gvpH-gvpI-gvpJ-gvpK-gvpL-gvpM and gvpA-gvpC-gvpN-gvpO) allows H.volcanii to produce gas vesicles. A minimal gas vesicle can be made in H.volcanii by gvpA1-gvpO1 plus gvpF1-gvpG1-gvpJ1-gvpK1-gvpL1-gvpM1; lack of enough GvpJ1 prevents formation. The same region restores gas vesicle production in H.halobium without the p-vac locus. In Halobacterium salinarum (strain ATCC 700922 / JCM 11081 / NRC-1) (Halobacterium halobium), this protein is Gas vesicle protein F1 (gvpF11).